Here is a 506-residue protein sequence, read N- to C-terminus: 2-isopropylmalate synthase (506 aa).

The Pyruvate carboxyltransferase domain occupies 4 to 266 (ILFMDTTLRD…EPSMTLKEIK (263 aa)). Positions 13, 201, 203, and 237 each coordinate Mn(2+). Residues 390–506 (NITQLQVHFV…KLKSFIQLVK (117 aa)) are regulatory domain.

It belongs to the alpha-IPM synthase/homocitrate synthase family. LeuA type 1 subfamily. In terms of assembly, homodimer. Requires Mn(2+) as cofactor.

It is found in the cytoplasm. The catalysed reaction is 3-methyl-2-oxobutanoate + acetyl-CoA + H2O = (2S)-2-isopropylmalate + CoA + H(+). The protein operates within amino-acid biosynthesis; L-leucine biosynthesis; L-leucine from 3-methyl-2-oxobutanoate: step 1/4. Functionally, catalyzes the condensation of the acetyl group of acetyl-CoA with 3-methyl-2-oxobutanoate (2-ketoisovalerate) to form 3-carboxy-3-hydroxy-4-methylpentanoate (2-isopropylmalate). This chain is 2-isopropylmalate synthase, found in Bacillus cereus (strain ZK / E33L).